The following is a 529-amino-acid chain: Chaperonin GroEL, chloroplastic (529 aa).

Residues threonine 29–proline 32, aspartate 86–threonine 90, glycine 414, aspartate 480–alanine 482, and aspartate 496 contribute to the ATP site.

This sequence belongs to the chaperonin (HSP60) family. Forms a cylinder of 14 subunits composed of two heptameric rings stacked back-to-back. Interacts with the co-chaperonin GroES.

It localises to the plastid. It is found in the chloroplast. It catalyses the reaction ATP + H2O + a folded polypeptide = ADP + phosphate + an unfolded polypeptide.. In terms of biological role, together with its co-chaperonin GroES, plays an essential role in assisting protein folding. The GroEL-GroES system forms a nano-cage that allows encapsulation of the non-native substrate proteins and provides a physical environment optimized to promote and accelerate protein folding. The protein is Chaperonin GroEL, chloroplastic of Guillardia theta (Cryptophyte).